The primary structure comprises 352 residues: C-C chemokine receptor type 5 (352 aa).

The Extracellular segment spans residues 1–30 (MDYQVSSPTYDIDYYTSEPCQKINVKQIAA). Sulfotyrosine is present on Tyr3. 2 O-linked (GalNAc...) serine glycosylation sites follow: Ser6 and Ser7. A sulfotyrosine mark is found at Tyr10, Tyr14, and Tyr15. 2 disulfides stabilise this stretch: Cys20–Cys269 and Cys101–Cys178. A helical membrane pass occupies residues 31–58 (RLLPPLYSLVFIFGFVGNMLVILILINC). Residues 59-68 (KRLKSMTDIY) are Cytoplasmic-facing. The helical transmembrane segment at 69–89 (LLNLAISDLFFLLTVPFWAHY) threads the bilayer. Topologically, residues 90–102 (AAAQWDFGNTMCQ) are extracellular. A helical membrane pass occupies residues 103–124 (LLTGLYFIGFFSGIFFIILLTI). At 125 to 141 (DRYLAIVHAVFALKART) the chain is on the cytoplasmic side. The chain crosses the membrane as a helical span at residues 142–166 (VTFGVVTSVITWVVAVFASLPGIIF). Residues 167–198 (TRSQKEGLHYTCSSHFPYSQYQFWKNFQTLKI) lie on the Extracellular side of the membrane. A helical membrane pass occupies residues 199–218 (VILGLVLPLLVMVICYSGIL). Over 219-235 (KTLLRCRNEKKRHRAVR) the chain is Cytoplasmic. Residues 236-260 (LIFTIMIVYFLFWAPYNIVLLLNTF) traverse the membrane as a helical segment. At 261–277 (QEFFGLNNCSSSNRLDQ) the chain is on the extracellular side. A helical membrane pass occupies residues 278–301 (AMQVTETLGMTHCCINPIIYAFVG). At 302–352 (EKFRNYLLVFFQKHIAKHFCKCCSIFQQEAPERASSVYTRSTGEQEISVGL) the chain is on the cytoplasmic side. 3 S-palmitoyl cysteine lipidation sites follow: Cys321, Cys323, and Cys324. Phosphoserine; by BARK1 occurs at positions 336, 337, 342, and 349.

This sequence belongs to the G-protein coupled receptor 1 family. As to quaternary structure, interacts with PRAF2. Efficient ligand binding to CCL3/MIP-1alpha and CCL4/MIP-1beta requires sulfation, O-glycosylation and sialic acid modifications. Glycosylation on Ser-6 is required for efficient binding of CCL4. Interacts with GRK2. Interacts with ARRB1 and ARRB2. Interacts with CNIH4. Interacts with S100A4; this interaction stimulates T-lymphocyte chemotaxis. Post-translationally, sulfated on at least 2 of the N-terminal tyrosines. Sulfation is required for efficient binding of the chemokines, CCL3 and CCL4. Palmitoylation in the C-terminal is important for cell surface expression. In terms of processing, phosphorylation on serine residues in the C-terminal is stimulated by binding CC chemokines especially by APO-RANTES. Post-translationally, O-glycosylated, but not N-glycosylated. Ser-6 appears to be the major site even if Ser-7 may be also O-glycosylated. Also sialylated glycans present which contribute to chemokine binding. Thr-16 and Ser-17 may also be glycosylated and, if so, with small moieties such as a T-antigen.

It is found in the cell membrane. Functionally, receptor for a number of inflammatory CC-chemokines including CCL3/MIP-1-alpha, CCL4/MIP-1-beta and RANTES and subsequently transduces a signal by increasing the intracellular calcium ion level. May play a role in the control of granulocytic lineage proliferation or differentiation. Participates in T-lymphocyte migration to the infection site by acting as a chemotactic receptor. This chain is C-C chemokine receptor type 5 (CCR5), found in Symphalangus syndactylus (Siamang).